The primary structure comprises 88 residues: Small ribosomal subunit protein bS16 (88 aa).

It belongs to the bacterial ribosomal protein bS16 family.

This Geotalea daltonii (strain DSM 22248 / JCM 15807 / FRC-32) (Geobacter daltonii) protein is Small ribosomal subunit protein bS16.